The chain runs to 65 residues: Sarcoplasmic/endoplasmic reticulum calcium ATPase regulator ARLN (65 aa).

Position 1 is an N-acetylmethionine (Met-1). Residues 1-38 (MEVGQAASGTDGVRERRGSSAARRRSQDEPVQSGMNGI) are disordered. Phosphoserine occurs at positions 19 and 26. Residues 44 to 64 (WLDLWLFILFDLALFIFVYLL) traverse the membrane as a helical segment.

As to quaternary structure, homooligomer. Can also form heterooligomers with other sarcoplasmic/endoplasmic reticulum calcium ATPase (SERCA) regulators ERLN, PLN, SLN and STRIT1/DWORF. Monomer. Interacts as a monomer with ATP2A2/SERCA2; the interaction results in inhibition of ATP2A2 Ca(2+) affinity.

Its subcellular location is the endoplasmic reticulum membrane. Its function is as follows. Inhibits the activity of the calcium ATPases ATP2A2/SERCA2 and ATP2A3/SERCA3 by decreasing their apparent affinity for Ca(2+). In Rattus norvegicus (Rat), this protein is Sarcoplasmic/endoplasmic reticulum calcium ATPase regulator ARLN (Arln).